The primary structure comprises 262 residues: Acyl-[acyl-carrier-protein]--UDP-N-acetylglucosamine O-acyltransferase (262 aa).

Belongs to the transferase hexapeptide repeat family. LpxA subfamily. Homotrimer.

It localises to the cytoplasm. It catalyses the reaction a (3R)-hydroxyacyl-[ACP] + UDP-N-acetyl-alpha-D-glucosamine = a UDP-3-O-[(3R)-3-hydroxyacyl]-N-acetyl-alpha-D-glucosamine + holo-[ACP]. It functions in the pathway glycolipid biosynthesis; lipid IV(A) biosynthesis; lipid IV(A) from (3R)-3-hydroxytetradecanoyl-[acyl-carrier-protein] and UDP-N-acetyl-alpha-D-glucosamine: step 1/6. Involved in the biosynthesis of lipid A, a phosphorylated glycolipid that anchors the lipopolysaccharide to the outer membrane of the cell. The polypeptide is Acyl-[acyl-carrier-protein]--UDP-N-acetylglucosamine O-acyltransferase (Vibrio campbellii (strain ATCC BAA-1116)).